The sequence spans 1434 residues: MRSARALLLALALRVCALDSETPSAGCTFEEDDDLNQCEYSQGEDDDFGWELVRSYMMPHLTADLPHGSYLMVNASQHAAGQRAHLLFQALSENDTHCLQFSYFMYSRDGHSPGTLSAYVRVMGGPVGSAVWNASGSHGRQWHQAELAVSLFWPSEYQVLFEAVISSERRGYLGLDDILLLNYPCSKAPHFSRLGDVEVNAGQNATFQCVAAGKAAEAERFLMQRQSGEVVPAASVKHISHRRFLATFQLDEVSKGEQDLYRCVTQSSRGSGVSNFAELIVKEPPTPIAPPQLLRAGSTYLIIQLNTNSIIGDGPIVRKEIEYRMTSGPWSEVHAVNMQTYKLWHLDPDTEYEISVLLTRPGEGGTGKPGPPLISRTKCAEPMRAPKGLAFSEIQSRQLTLQWEPLGYNLTRCHTYSVSLCYRYLVGSGLNQTFRECAKMERNANRYTIKNLLPYRNIHVKLILSNPEGRKEGKEVTFQTDEDVPGGIASESLTFTPLEDMIFLKWEEPVEPNGLITQYEISYQSIESSDPAVNVPGPRRTVSKLRNETYHVFSNLHPGTTYLFSVRARTGKGFGQTALTEITTNISAPTFDYGDMPSPLGESESTITVLLRPAQGRGAPISTYQVIVEEDRPKRIKRELGGQECFPVPLTFDDAMSRGSVHYFGAELPASSLTEAKPFTVGDNQTYSGYWNPPLEPKKAYLIYFQAMSNLKGETRLNCIRIARKAACKESKRPLEVSQHSEEMGLILGICAGGLVVLIILLGAIIVVIRKGKPVNMTKATINYRHEKTHMMSAIDRSFTDQSTLQEDERLGLSFMDTHNYSNRGDQRSSVVNESSSLLGGSPRRQCGRKGSPYHTGQLHPAVRVADLLQHINQMKTAEGYGFKQEYESFFEGWDASKKKDKTKGRQDHVSTYDRHRVKLHPLLGDPNSDYINANYIDGYHRSNHFIATQGPKQEMVYDFWRMVWQEHCSSIVMITKLVEVGRVKCSKYWPDDSEMYGDIKITLVKSEMLAEYAVRTFALERRGYSARHEVKQFHFTSWPEHGVPYHATGLLAFIRRVKASTPPDAGPIVIHCSAGTGRTGCYIVLDVMLDMAECEGVVDIYNCVKTLCSRRINMIQTEEQYIFIHDAILEACLCGETSIPASEFKPTYKEMVRIEPQSNSSQLREEFQTLNSVTPHLDVEECSIALLPRNRERNRSMDVLPPDRCLPFLISVDGDSNNYINAALTDSYTKSAAFIVTLHPLQNTTTDFWRLVYDYGCTSIVMLNQLNQSNSAWPCLQYWPEPGLQHYGPMEVEYVSGAADEDIVSRLFRVQNITRLQEGHLMVRHFQYLRWSAYRDTPDSKKSFLHLLAQVERWQKESGDGRTVVHCLNGGGRSGTYCASTMILEMIKCHNMADIFYAAKTLRNYKPNMVETLEQYHFCYDIALEYLESLETR.

Residues 1–17 form the signal peptide; it reads MRSARALLLALALRVCA. At 18 to 748 the chain is on the extracellular side; that stretch reads LDSETPSAGC…QHSEEMGLIL (731 aa). Residues 25–187 enclose the MAM domain; the sequence is AGCTFEEDDD…ILLLNYPCSK (163 aa). Asn74 carries an N-linked (GlcNAc...) asparagine glycan. Positions 189–274 constitute an Ig-like C2-type domain; it reads PHFSRLGDVE…TQSSRGSGVS (86 aa). Cys209 and Cys263 form a disulfide bridge. Fibronectin type-III domains follow at residues 287 to 382, 385 to 483, 484 to 590, and 597 to 677; these read PIAP…CAEP, APKG…TDED, VPGG…SAPT, and PSPL…TEAK. Residue Asn409 is glycosylated (N-linked (GlcNAc...) asparagine). An N-linked (GlcNAc...) asparagine glycan is attached at Asn684. A helical membrane pass occupies residues 749-769; the sequence is GICAGGLVVLIILLGAIIVVI. At 770–1434 the chain is on the cytoplasmic side; it reads RKGKPVNMTK…LEYLESLETR (665 aa). Positions 824–839 are enriched in polar residues; sequence RGDQRSSVVNESSSLL. Residues 824–851 are disordered; sequence RGDQRSSVVNESSSLLGGSPRRQCGRKG. Tyrosine-protein phosphatase domains are found at residues 876-1132 and 1164-1427; these read KTAE…ILEA and LREE…ALEY. Substrate contacts are provided by residues Glu1041, 1073–1079, and Gln1117; that span reads CSAGTGR. Cys1073 (phosphocysteine intermediate) is an active-site residue. The Phosphocysteine intermediate role is filled by Cys1368.

The protein belongs to the protein-tyrosine phosphatase family. Receptor class 2B subfamily.

The protein localises to the cell junction. It is found in the cell membrane. It carries out the reaction O-phospho-L-tyrosyl-[protein] + H2O = L-tyrosyl-[protein] + phosphate. Its function is as follows. Tyrosine-protein phosphatase which dephosphorylates CTNNB1. May function in cell proliferation and migration and play a role in the maintenance of epithelial integrity. The polypeptide is Receptor-type tyrosine-protein phosphatase U (PTPRU) (Gallus gallus (Chicken)).